The following is a 157-amino-acid chain: uncharacterized protein (157 aa).

May be a DNA-binding protein involved in virion nucleoprotein condensation. This is an uncharacterized protein from Mycoplasma (Bacteriophage L2).